A 101-amino-acid chain; its full sequence is Protein SSXA1 (101 aa).

The region spanning 19 to 83 (ETCQAFEDIS…ERVTKSVLSD (65 aa)) is the KRAB-related domain. The disordered stretch occupies residues 73-101 (KERVTKSVLSDSDEVSSHESQDKRKNPVV). Over residues 87 to 101 (VSSHESQDKRKNPVV) the composition is skewed to basic and acidic residues.

The protein belongs to the SSX family. Specifically expressed in testis (at protein level). Not detected in other tissues tested (at protein level).

Its subcellular location is the nucleus. Its function is as follows. Could act as a modulator of transcription. The chain is Protein SSXA1 from Mus musculus (Mouse).